The primary structure comprises 470 residues: ATP synthase subunit beta (470 aa).

Residue 148–155 (GGAGVGKT) participates in ATP binding.

It belongs to the ATPase alpha/beta chains family. F-type ATPases have 2 components, CF(1) - the catalytic core - and CF(0) - the membrane proton channel. CF(1) has five subunits: alpha(3), beta(3), gamma(1), delta(1), epsilon(1). CF(0) has three main subunits: a(1), b(2) and c(9-12). The alpha and beta chains form an alternating ring which encloses part of the gamma chain. CF(1) is attached to CF(0) by a central stalk formed by the gamma and epsilon chains, while a peripheral stalk is formed by the delta and b chains.

It is found in the cell inner membrane. It catalyses the reaction ATP + H2O + 4 H(+)(in) = ADP + phosphate + 5 H(+)(out). Its function is as follows. Produces ATP from ADP in the presence of a proton gradient across the membrane. The catalytic sites are hosted primarily by the beta subunits. The sequence is that of ATP synthase subunit beta from Teredinibacter turnerae (strain ATCC 39867 / T7901).